A 180-amino-acid chain; its full sequence is uncharacterized protein (180 aa).

This is an uncharacterized protein from Dictyostelium discoideum (Social amoeba).